Here is a 577-residue protein sequence, read N- to C-terminus: Methionine--tRNA ligase, mitochondrial (577 aa).

Residues 25-37 (PIFYVNAAPHIGH) carry the 'HIGH' region motif. Positions 329-333 (KMSKS) match the 'KMSKS' region motif. K332 is an ATP binding site.

Belongs to the class-I aminoacyl-tRNA synthetase family.

It is found in the mitochondrion matrix. The enzyme catalyses tRNA(Met) + L-methionine + ATP = L-methionyl-tRNA(Met) + AMP + diphosphate. This is Methionine--tRNA ligase, mitochondrial (MSM1) from Candida albicans (Yeast).